A 324-amino-acid chain; its full sequence is Probable cell division protein WhiA (324 aa).

The segment at residues 275-308 is a DNA-binding region (H-T-H motif); it reads SLEELGALADPPLTKDAIAGRIRRLIAMADRRAD.

The protein belongs to the WhiA family.

Functionally, involved in cell division and chromosome segregation. This is Probable cell division protein WhiA from Acidothermus cellulolyticus (strain ATCC 43068 / DSM 8971 / 11B).